The primary structure comprises 147 residues: Small ribosomal subunit protein bS16 (147 aa).

A disordered region spans residues 81–147 (QKFTGDTSPS…GDNSGEKAEA (67 aa)). Basic and acidic residues-rich tracts occupy residues 95-104 (QPERPNKDDL) and 114-125 (EAPREAITKKSE). A compositionally biased stretch (low complexity) spans 126–140 (GAAADEASESAAGDN).

This sequence belongs to the bacterial ribosomal protein bS16 family.

The sequence is that of Small ribosomal subunit protein bS16 from Cutibacterium acnes (strain DSM 16379 / KPA171202) (Propionibacterium acnes).